Here is a 219-residue protein sequence, read N- to C-terminus: 3-dehydroquinate dehydratase (219 aa).

Residues S10, 29-31 (EVR), and R59 each bind 3-dehydroquinate. H116 serves as the catalytic Proton donor/acceptor. The active-site Schiff-base intermediate with substrate is the K142. The 3-dehydroquinate site is built by R180 and Q203.

Belongs to the type-I 3-dehydroquinase family. In terms of assembly, homodimer.

The enzyme catalyses 3-dehydroquinate = 3-dehydroshikimate + H2O. It functions in the pathway metabolic intermediate biosynthesis; chorismate biosynthesis; chorismate from D-erythrose 4-phosphate and phosphoenolpyruvate: step 3/7. Involved in the third step of the chorismate pathway, which leads to the biosynthesis of aromatic amino acids. Catalyzes the cis-dehydration of 3-dehydroquinate (DHQ) and introduces the first double bond of the aromatic ring to yield 3-dehydroshikimate. The polypeptide is 3-dehydroquinate dehydratase (Methanocella arvoryzae (strain DSM 22066 / NBRC 105507 / MRE50)).